Here is a 31-residue protein sequence, read N- to C-terminus: Photosystem II reaction center protein T (31 aa).

Residues 3 to 23 (ALVYTFLLVGTLGIIFFAIFF) form a helical membrane-spanning segment.

The protein belongs to the PsbT family. As to quaternary structure, PSII is composed of 1 copy each of membrane proteins PsbA, PsbB, PsbC, PsbD, PsbE, PsbF, PsbH, PsbI, PsbJ, PsbK, PsbL, PsbM, PsbT, PsbY, PsbZ, Psb30/Ycf12, at least 3 peripheral proteins of the oxygen-evolving complex and a large number of cofactors. It forms dimeric complexes.

The protein localises to the plastid. It localises to the chloroplast thylakoid membrane. Functionally, found at the monomer-monomer interface of the photosystem II (PS II) dimer, plays a role in assembly and dimerization of PSII. PSII is a light-driven water plastoquinone oxidoreductase, using light energy to abstract electrons from H(2)O, generating a proton gradient subsequently used for ATP formation. In Chlorella vulgaris (Green alga), this protein is Photosystem II reaction center protein T.